The chain runs to 176 residues: MYRIYTRTGDNGTTALFGGSRIDKDDIRVEAYGTVDELISQLGVCYASTRQAELRQELHAMQKMLFVLGAELASDQKGLTRLKQRIGEEDIQALEQLIDRNMAQSGPLKEFVIPGKNLASAQLHVARTLTRRLERILIAMGRTLTLRDEARRYINRLSDALFSMARIEETTPDVCA.

ATP contacts are provided by residues 6–14 (TRTGDNGTT), Lys24, 131–136 (RRLERI), and Asn155.

This sequence belongs to the Cob(I)alamin adenosyltransferase family.

The protein resides in the cytoplasm. The catalysed reaction is 2 cob(II)yrinate a,c diamide + reduced [electron-transfer flavoprotein] + 2 ATP = 2 adenosylcob(III)yrinate a,c-diamide + 2 triphosphate + oxidized [electron-transfer flavoprotein] + 3 H(+). It catalyses the reaction 2 cob(II)alamin + reduced [electron-transfer flavoprotein] + 2 ATP = 2 adenosylcob(III)alamin + 2 triphosphate + oxidized [electron-transfer flavoprotein] + 3 H(+). It participates in cofactor biosynthesis; adenosylcobalamin biosynthesis; adenosylcobalamin from cob(II)yrinate a,c-diamide: step 2/7. This Citrobacter freundii protein is Corrinoid adenosyltransferase.